A 249-amino-acid chain; its full sequence is Putative ABC transporter ATP-binding protein GSU1281 (249 aa).

Positions 6 to 236 (VEVRDLCHCY…DELLATCRLE (231 aa)) constitute an ABC transporter domain. 39 to 46 (GANGAGKS) is an ATP binding site.

The protein belongs to the ABC transporter superfamily.

It is found in the cell inner membrane. Functionally, probably part of an ABC transporter complex. Responsible for energy coupling to the transport system. The protein is Putative ABC transporter ATP-binding protein GSU1281 of Geobacter sulfurreducens (strain ATCC 51573 / DSM 12127 / PCA).